A 149-amino-acid chain; its full sequence is Large ribosomal subunit protein uL15 (149 aa).

The tract at residues 1–61 (MELNSLRPAL…GGQMPLQRRL (61 aa)) is disordered. The segment covering 30–39 (TATKGHKGQK) has biased composition (basic residues).

This sequence belongs to the universal ribosomal protein uL15 family. Part of the 50S ribosomal subunit.

Its function is as follows. Binds to the 23S rRNA. The sequence is that of Large ribosomal subunit protein uL15 from Trichlorobacter lovleyi (strain ATCC BAA-1151 / DSM 17278 / SZ) (Geobacter lovleyi).